The chain runs to 310 residues: MKGLVIKNTGSWYQVKTDDGQFIECKIKGNFRLKGIRSTNPVAVGDRVQIILNQEGTAFINEIEDRKNYIIRRSSNLSKQSHILAANLDQCMLVVTVNYPETSTIFIDRFLASAEAYRVPVKLVFNKVDAYNEDELRYLDALINLYTHIGYPCFKVSAKEGTGVDAIKKDLEGKITLFSGHSGVGKSTLINAILPGTKVKTGEISTYHNKGMHTTTFSEMFSVDGDGYIIDTPGIKGFGTFDMEEEEIGHYFPEIFKVSADCKYGNCTHRHEPGCAVREAVEKHLISESRYTSYLNMLEDKEEGKYRAAY.

Residues 77-238 (LSKQSHILAA…IIDTPGIKGF (162 aa)) form the CP-type G domain. Residues 126–129 (NKVD) and 180–188 (GHSGVGKST) each bind GTP. Positions 262, 267, 269, and 275 each coordinate Zn(2+).

The protein belongs to the TRAFAC class YlqF/YawG GTPase family. RsgA subfamily. Monomer. Associates with 30S ribosomal subunit, binds 16S rRNA. Requires Zn(2+) as cofactor.

The protein resides in the cytoplasm. In terms of biological role, one of several proteins that assist in the late maturation steps of the functional core of the 30S ribosomal subunit. Helps release RbfA from mature subunits. May play a role in the assembly of ribosomal proteins into the subunit. Circularly permuted GTPase that catalyzes slow GTP hydrolysis, GTPase activity is stimulated by the 30S ribosomal subunit. This Bacteroides thetaiotaomicron (strain ATCC 29148 / DSM 2079 / JCM 5827 / CCUG 10774 / NCTC 10582 / VPI-5482 / E50) protein is Small ribosomal subunit biogenesis GTPase RsgA 2.